Consider the following 261-residue polypeptide: Calbindin (261 aa).

An N-acetylalanine modification is found at A2. Residues 2–7 form an interaction with RANBP9 region; the sequence is AESHLQ. EF-hand domains lie at 11–46, 53–88, 98–133, 142–177, and 186–221; these read ITAS…LQQA, ELSP…EENF, KSCE…LLEK, KLAE…QENF, and MCGK…LCEK. The Ca(2+) site is built by D24, D26, S28, Y30, and E35. Positions 111, 113, 122, 155, 157, 159, 161, 166, 199, 201, 203, 205, and 210 each coordinate Ca(2+).

The protein belongs to the calbindin family. In terms of assembly, interacts with RANBP9.

Functionally, buffers cytosolic calcium. May stimulate a membrane Ca(2+)-ATPase and a 3',5'-cyclic nucleotide phosphodiesterase. This Pongo abelii (Sumatran orangutan) protein is Calbindin (CALB1).